The following is a 252-amino-acid chain: Large ribosomal subunit protein uL3 (252 aa).

Residue Gln169 is modified to N5-methylglutamine.

This sequence belongs to the universal ribosomal protein uL3 family. In terms of assembly, part of the 50S ribosomal subunit. Forms a cluster with proteins L14 and L19. In terms of processing, methylated by PrmB.

In terms of biological role, one of the primary rRNA binding proteins, it binds directly near the 3'-end of the 23S rRNA, where it nucleates assembly of the 50S subunit. This chain is Large ribosomal subunit protein uL3, found in Hyphomonas neptunium (strain ATCC 15444).